We begin with the raw amino-acid sequence, 264 residues long: Thymidylate synthase (264 aa).

DUMP contacts are provided by residues arginine 21 and 126 to 127 (RR). Cysteine 146 acts as the Nucleophile in catalysis. DUMP contacts are provided by residues 166-169 (RSAD), asparagine 177, and 207-209 (HLY). Aspartate 169 lines the (6R)-5,10-methylene-5,6,7,8-tetrahydrofolate pocket. (6R)-5,10-methylene-5,6,7,8-tetrahydrofolate is bound at residue alanine 263.

This sequence belongs to the thymidylate synthase family. Bacterial-type ThyA subfamily. Homodimer.

The protein localises to the cytoplasm. The catalysed reaction is dUMP + (6R)-5,10-methylene-5,6,7,8-tetrahydrofolate = 7,8-dihydrofolate + dTMP. The protein operates within pyrimidine metabolism; dTTP biosynthesis. In terms of biological role, catalyzes the reductive methylation of 2'-deoxyuridine-5'-monophosphate (dUMP) to 2'-deoxythymidine-5'-monophosphate (dTMP) while utilizing 5,10-methylenetetrahydrofolate (mTHF) as the methyl donor and reductant in the reaction, yielding dihydrofolate (DHF) as a by-product. This enzymatic reaction provides an intracellular de novo source of dTMP, an essential precursor for DNA biosynthesis. In Afipia carboxidovorans (strain ATCC 49405 / DSM 1227 / KCTC 32145 / OM5) (Oligotropha carboxidovorans), this protein is Thymidylate synthase.